A 482-amino-acid polypeptide reads, in one-letter code: uncharacterized protein (482 aa).

One can recognise an HTH gntR-type domain in the interval 12–80 (LPKYRQIVHF…MGKGTVVINN (69 aa)). The segment at residues 40–59 (QRTLAKDFQVNRSTVITALE) is a DNA-binding region (H-T-H motif). Lys325 is modified (N6-(pyridoxal phosphate)lysine).

In the C-terminal section; belongs to the class-I pyridoxal-phosphate-dependent aminotransferase family. It depends on pyridoxal 5'-phosphate as a cofactor.

This is an uncharacterized protein from Bacillus subtilis (strain 168).